The following is a 344-amino-acid chain: Dihydroorotase (344 aa).

Zn(2+)-binding residues include His-14 and His-16. Substrate-binding positions include 16-18 and Asn-42; that span reads HVR. 3 residues coordinate Zn(2+): Lys-99, His-136, and His-174. Position 99 is an N6-carboxylysine (Lys-99). Substrate is bound at residue His-136. Residue Leu-219 coordinates substrate. Asp-247 provides a ligand contact to Zn(2+). Asp-247 is an active-site residue. Positions 251 and 263 each coordinate substrate.

The protein belongs to the metallo-dependent hydrolases superfamily. DHOase family. Class II DHOase subfamily. In terms of assembly, homodimer. It depends on Zn(2+) as a cofactor.

The catalysed reaction is (S)-dihydroorotate + H2O = N-carbamoyl-L-aspartate + H(+). Its pathway is pyrimidine metabolism; UMP biosynthesis via de novo pathway; (S)-dihydroorotate from bicarbonate: step 3/3. In terms of biological role, catalyzes the reversible cyclization of carbamoyl aspartate to dihydroorotate. The polypeptide is Dihydroorotase (Leptothrix cholodnii (strain ATCC 51168 / LMG 8142 / SP-6) (Leptothrix discophora (strain SP-6))).